Consider the following 150-residue polypeptide: Large ribosomal subunit protein bL9 (150 aa).

Belongs to the bacterial ribosomal protein bL9 family.

Functionally, binds to the 23S rRNA. The polypeptide is Large ribosomal subunit protein bL9 (Burkholderia mallei (strain NCTC 10247)).